A 483-amino-acid polypeptide reads, in one-letter code: Bifunctional protein HldE (483 aa).

The interval 1 to 327 (MDDALAHLPR…ACASSAQGEP (327 aa)) is ribokinase. 201–204 (NRKE) contributes to the ATP binding site. Asp272 is a catalytic residue. Residues 354–483 (FTNGCFDLLH…TTNLIARMNS (130 aa)) are cytidylyltransferase.

It in the N-terminal section; belongs to the carbohydrate kinase PfkB family. The protein in the C-terminal section; belongs to the cytidylyltransferase family. In terms of assembly, homodimer.

It catalyses the reaction D-glycero-beta-D-manno-heptose 7-phosphate + ATP = D-glycero-beta-D-manno-heptose 1,7-bisphosphate + ADP + H(+). It carries out the reaction D-glycero-beta-D-manno-heptose 1-phosphate + ATP + H(+) = ADP-D-glycero-beta-D-manno-heptose + diphosphate. It functions in the pathway nucleotide-sugar biosynthesis; ADP-L-glycero-beta-D-manno-heptose biosynthesis; ADP-L-glycero-beta-D-manno-heptose from D-glycero-beta-D-manno-heptose 7-phosphate: step 1/4. It participates in nucleotide-sugar biosynthesis; ADP-L-glycero-beta-D-manno-heptose biosynthesis; ADP-L-glycero-beta-D-manno-heptose from D-glycero-beta-D-manno-heptose 7-phosphate: step 3/4. In terms of biological role, catalyzes the phosphorylation of D-glycero-D-manno-heptose 7-phosphate at the C-1 position to selectively form D-glycero-beta-D-manno-heptose-1,7-bisphosphate. Functionally, catalyzes the ADP transfer from ATP to D-glycero-beta-D-manno-heptose 1-phosphate, yielding ADP-D-glycero-beta-D-manno-heptose. The sequence is that of Bifunctional protein HldE from Caulobacter vibrioides (strain ATCC 19089 / CIP 103742 / CB 15) (Caulobacter crescentus).